A 318-amino-acid chain; its full sequence is Trans-prenyltransferase (318 aa).

The helical transmembrane segment at 1-21 (MLHLIYISIIVVLIIILISYT) threads the bilayer. Isopentenyl diphosphate contacts are provided by Lys-85, Arg-88, and His-122. Asp-129 and Asp-135 together coordinate Mg(2+). Arg-140 contributes to the dimethylallyl diphosphate binding site. Arg-141 contributes to the isopentenyl diphosphate binding site. Positions 216, 217, and 254 each coordinate dimethylallyl diphosphate.

It belongs to the FPP/GGPP synthase family. Asfivirus trans-prenyltransferase subfamily. Mg(2+) is required as a cofactor.

The protein resides in the host endoplasmic reticulum. It is found in the host membrane. The catalysed reaction is isopentenyl diphosphate + dimethylallyl diphosphate = (2E)-geranyl diphosphate + diphosphate. It catalyses the reaction isopentenyl diphosphate + (2E)-geranyl diphosphate = (2E,6E)-farnesyl diphosphate + diphosphate. It carries out the reaction isopentenyl diphosphate + (2E,6E)-farnesyl diphosphate = (2E,6E,10E)-geranylgeranyl diphosphate + diphosphate. The enzyme catalyses isopentenyl diphosphate + (2E,6E,10E)-geranylgeranyl diphosphate = (2E,6E,10E,14E)-geranylfarnesyl diphosphate + diphosphate. Its pathway is isoprenoid biosynthesis; farnesyl diphosphate biosynthesis; farnesyl diphosphate from geranyl diphosphate and isopentenyl diphosphate: step 1/1. The protein operates within isoprenoid biosynthesis; geranyl diphosphate biosynthesis; geranyl diphosphate from dimethylallyl diphosphate and isopentenyl diphosphate: step 1/1. It functions in the pathway isoprenoid biosynthesis; geranylgeranyl diphosphate biosynthesis; geranylgeranyl diphosphate from farnesyl diphosphate and isopentenyl diphosphate: step 1/1. Trans-prenyltransferase that catalyzes the sequential condensation of isopentenyl diphosphate (IPP) with different allylic diphosphates, such as dimethylallyl diphosphate (DMAPP), geranyl diphosphate (GPP), farnesyl diphosphate (FPP) and geranylgeranyl diphosphate (GGPP), farnesyl diphosphate being the best allylic substrate. The polypeptide is Trans-prenyltransferase (African swine fever virus (isolate Tick/Malawi/Lil 20-1/1983) (ASFV)).